A 505-amino-acid chain; its full sequence is Trans-cinnamate 4-monooxygenase (505 aa).

The helical transmembrane segment at 3–23 threads the bilayer; it reads LLLLEKTLLGSFVAILVAILV. (E)-cinnamate-binding positions include 213 to 218 and A306; that span reads RSRLAQ. C447 provides a ligand contact to heme.

This sequence belongs to the cytochrome P450 family. The cofactor is heme.

It is found in the membrane. It catalyses the reaction (E)-cinnamate + reduced [NADPH--hemoprotein reductase] + O2 = (E)-4-coumarate + oxidized [NADPH--hemoprotein reductase] + H2O + H(+). Its pathway is phenylpropanoid metabolism; trans-4-coumarate biosynthesis; trans-4-coumarate from trans-cinnamate: step 1/1. Catalyzes the first oxidative step of the phenylpropanoid pathway in higher plants by transforming trans-cinnamate into p-coumarate. The compounds formed by this pathway are essential components for lignification, pollination, and defense against ultraviolet light, predators and pathogens. This Populus tremuloides (Quaking aspen) protein is Trans-cinnamate 4-monooxygenase (CYP73A13).